Consider the following 209-residue polypeptide: Guanylate kinase (209 aa).

A Guanylate kinase-like domain is found at 9–188 (GIMLVISSPS…SVHQIKCIFT (180 aa)). 16-23 (SPSGGGKT) is an ATP binding site.

The protein belongs to the guanylate kinase family.

It is found in the cytoplasm. It carries out the reaction GMP + ATP = GDP + ADP. In terms of biological role, essential for recycling GMP and indirectly, cGMP. In Ehrlichia canis (strain Jake), this protein is Guanylate kinase.